The chain runs to 276 residues: Orotidine 5'-phosphate decarboxylase (276 aa).

Residue Lys-95 is the Proton donor of the active site.

Belongs to the OMP decarboxylase family. Type 2 subfamily.

It carries out the reaction orotidine 5'-phosphate + H(+) = UMP + CO2. It functions in the pathway pyrimidine metabolism; UMP biosynthesis via de novo pathway; UMP from orotate: step 2/2. The sequence is that of Orotidine 5'-phosphate decarboxylase (pyrF) from Mycolicibacterium smegmatis (strain ATCC 700084 / mc(2)155) (Mycobacterium smegmatis).